Here is a 119-residue protein sequence, read N- to C-terminus: Large ribosomal subunit protein bL20 (119 aa).

The protein belongs to the bacterial ribosomal protein bL20 family.

In terms of biological role, binds directly to 23S ribosomal RNA and is necessary for the in vitro assembly process of the 50S ribosomal subunit. It is not involved in the protein synthesizing functions of that subunit. This Treponema denticola (strain ATCC 35405 / DSM 14222 / CIP 103919 / JCM 8153 / KCTC 15104) protein is Large ribosomal subunit protein bL20.